The sequence spans 1431 residues: Zinc finger protein 687b (1431 aa).

Disordered regions lie at residues 24–481 (KEAI…RPLK) and 504–538 (KGGAAANAGKDANKGQTGGRAGPVKGGKKNDTTAG). Positions 61-73 (SPSPSTDSQSDPS) are enriched in low complexity. The span at 103–122 (GFVSSGGSVHMSQSRGQPNG) shows a compositional bias: polar residues. Composition is skewed to low complexity over residues 174-188 (MQLLQQQHMQQEMNL), 196-209 (APANPSGASGAASP), and 217-248 (LLSTPSTASSSSPSSSSPSVGSRVSGAVASSP). Over residues 249–267 (LATSLTEPFNGTPRLSSSA) the composition is skewed to polar residues. A compositionally biased stretch (low complexity) spans 311 to 324 (SQSPSIPPSTSISP). The segment covering 342–359 (RAQQNWLSTAAQTGNGKS) has biased composition (polar residues). A compositionally biased stretch (basic and acidic residues) spans 361-377 (PQEERNPEHVIEERDSP). Low complexity predominate over residues 385 to 410 (PKSSMPTSAVTKRSCSPAAASSPSAA). Basic and acidic residues predominate over residues 438–449 (DGGKGDTDKIEV). The span at 519–528 (QTGGRAGPVK) shows a compositional bias: gly residues. A C2H2-type 1; degenerate zinc finger spans residues 674-692 (YRCLECGDSFALERSLARH). Residues 754-816 (TTPIGMLSPS…GPQSPQALMP (63 aa)) form a disordered region. Residues 760–775 (LSPSLSSPPLTSSTTP) are compositionally biased toward low complexity. Polar residues predominate over residues 781–802 (APSTSSPLKDSPSPGTASTQPS). The C2H2-type 2; degenerate zinc-finger motif lies at 830 to 853 (FKCPECQAQFLSKAELVTHFQQIR). 4 consecutive C2H2-type zinc fingers follow at residues 919–942 (YRCSSCQVVFGGLNSIKSHIQTAH), 947–970 (HKCPNCPMAFKSAQSAQGHITSQH), 982–1004 (YKCVMCDTVFTQKPLLYMHFDTH), and 1013–1036 (FKCPDCTKLYAQKGSMMEHIKTAH). Residues 1041-1120 (VKAETPPTTS…QVSSPESGNM (80 aa)) are disordered. Over residues 1043–1057 (AETPPTTSSPVSAPA) the composition is skewed to low complexity. The segment covering 1058-1075 (GNSTSKPKPATENNSDEL) has biased composition (polar residues). A compositionally biased stretch (acidic residues) spans 1080–1111 (GEEEEEGEDEEGEQEGEEREDEEEEENEEEEQ). The C2H2-type 7 zinc finger occupies 1122–1145 (WRCKECKKRFPEREDYIDHMKNEH). The C2H2-type 8; degenerate zinc finger occupies 1205–1227 (WHCSEGKRTFSSRLILEKHIRVR). Positions 1225–1310 (RVRHGIRSRQ…EEEDGTFRCT (86 aa)) are disordered. 2 C2H2-type zinc fingers span residues 1307–1329 (FRCTPCGFTTQDWEEFQRHIPVH) and 1337–1360 (QQCLQCGACFASAGSLSRHKFITH). A disordered region spans residues 1362–1392 (LRQGQHDRNASPGASPQYGSPSSPKAGEDGD). Residues 1373–1384 (PGASPQYGSPSS) show a composition bias toward polar residues. The C2H2-type 11 zinc finger occupies 1395-1425 (VSCRVCGRRFDKASDLNTHFRTHGMAFITAH).

This sequence belongs to the krueppel C2H2-type zinc-finger protein family. In terms of tissue distribution, widely expressed with highest levels in eye, spleen and ovary.

It localises to the nucleus. In terms of biological role, may be involved in transcriptional regulation. In Danio rerio (Zebrafish), this protein is Zinc finger protein 687b (znf687b).